Consider the following 144-residue polypeptide: Small ribosomal subunit protein bS6 (144 aa).

Residues 92–144 are disordered; sequence KVDGHDEGPSVQMQKRDDRGDREERGDRGDRGDRGPRGDRGPREDRGPRPERR. Residues 93-144 are compositionally biased toward basic and acidic residues; that stretch reads VDGHDEGPSVQMQKRDDRGDREERGDRGDRGDRGPRGDRGPREDRGPRPERR.

The protein belongs to the bacterial ribosomal protein bS6 family.

Functionally, binds together with bS18 to 16S ribosomal RNA. This Rhodobacter capsulatus (strain ATCC BAA-309 / NBRC 16581 / SB1003) protein is Small ribosomal subunit protein bS6 (rpsF).